The primary structure comprises 430 residues: Aspartate aminotransferase, mitochondrial (430 aa).

A mitochondrion-targeting transit peptide spans 1–29 (MALLHSARVLSGVASAFHPGLAAAASARA). The residue at position 48 (threonine 48) is a Phosphothreonine. N6-acetyllysine is present on lysine 59. Substrate is bound at residue glycine 65. Lysine 73 is modified (N6-acetyllysine; alternate). N6-succinyllysine; alternate is present on lysine 73. Lysine 82 bears the N6-acetyllysine mark. Lysine 90 is subject to N6-acetyllysine; alternate. Lysine 90 is subject to N6-succinyllysine; alternate. A 3'-nitrotyrosine; alternate modification is found at tyrosine 96. A Phosphotyrosine; alternate modification is found at tyrosine 96. Lysine 122 is subject to N6-acetyllysine; alternate. The residue at position 122 (lysine 122) is an N6-succinyllysine; alternate. Serine 143 carries the phosphoserine modification. An N6-acetyllysine; alternate modification is found at lysine 159. Residue lysine 159 is modified to N6-succinyllysine; alternate. Tryptophan 162 contributes to the substrate binding site. Residue lysine 185 is modified to N6-acetyllysine; alternate. Lysine 185 carries the post-translational modification N6-succinyllysine; alternate. Asparagine 215 contributes to the substrate binding site. N6-succinyllysine is present on lysine 227. At lysine 234 the chain carries N6-acetyllysine. N6-acetyllysine; alternate occurs at positions 279 and 296. Position 279 is an N6-(pyridoxal phosphate)lysine; alternate (lysine 279). An N6-succinyllysine; alternate modification is found at lysine 296. At lysine 302 the chain carries N6-acetyllysine. The residue at position 309 (lysine 309) is an N6-acetyllysine; alternate. Residue lysine 309 is modified to N6-succinyllysine; alternate. An Asymmetric dimethylarginine modification is found at arginine 313. Lysine 338 carries the N6-acetyllysine; alternate modification. An N6-succinyllysine; alternate modification is found at lysine 338. At lysine 345 the chain carries N6-acetyllysine. Lysine 363 carries the post-translational modification N6-acetyllysine; alternate. Lysine 363 is subject to N6-succinyllysine; alternate. N6-acetyllysine is present on residues lysine 364 and lysine 387. N6-acetyllysine; alternate occurs at positions 396 and 404. 2 positions are modified to N6-succinyllysine; alternate: lysine 396 and lysine 404. Residue arginine 407 coordinates substrate.

The protein belongs to the class-I pyridoxal-phosphate-dependent aminotransferase family. Homodimer. Pyridoxal 5'-phosphate serves as cofactor.

It localises to the mitochondrion matrix. It is found in the cell membrane. It carries out the reaction L-aspartate + 2-oxoglutarate = oxaloacetate + L-glutamate. The enzyme catalyses L-kynurenine + 2-oxoglutarate = kynurenate + L-glutamate + H2O. Its function is as follows. Catalyzes the irreversible transamination of the L-tryptophan metabolite L-kynurenine to form kynurenic acid (KA). As a member of the malate-aspartate shuttle, it has a key role in the intracellular NAD(H) redox balance. Is important for metabolite exchange between mitochondria and cytosol, and for amino acid metabolism. Facilitates cellular uptake of long-chain free fatty acids. This is Aspartate aminotransferase, mitochondrial (GOT2) from Oryctolagus cuniculus (Rabbit).